The following is a 432-amino-acid chain: Phosphomethylpyrimidine synthase (432 aa).

Residues asparagine 66, methionine 95, tyrosine 124, histidine 163, 185 to 187, 226 to 229, and glutamate 265 contribute to the substrate site; these read SRG and DGMR. Zn(2+) is bound at residue histidine 269. Tyrosine 292 serves as a coordination point for substrate. A Zn(2+)-binding site is contributed by histidine 333. Positions 409, 412, and 416 each coordinate [4Fe-4S] cluster.

This sequence belongs to the ThiC family. It depends on [4Fe-4S] cluster as a cofactor.

It carries out the reaction 5-amino-1-(5-phospho-beta-D-ribosyl)imidazole + S-adenosyl-L-methionine = 4-amino-2-methyl-5-(phosphooxymethyl)pyrimidine + CO + 5'-deoxyadenosine + formate + L-methionine + 3 H(+). It participates in cofactor biosynthesis; thiamine diphosphate biosynthesis. Its function is as follows. Catalyzes the synthesis of the hydroxymethylpyrimidine phosphate (HMP-P) moiety of thiamine from aminoimidazole ribotide (AIR) in a radical S-adenosyl-L-methionine (SAM)-dependent reaction. The chain is Phosphomethylpyrimidine synthase from Desulforudis audaxviator (strain MP104C).